A 380-amino-acid polypeptide reads, in one-letter code: F-box/kelch-repeat protein At3g18720 (380 aa).

In terms of domain architecture, F-box spans 47–94; that stretch reads LWDKQIPTDLLQEILSRLGLKANIHASLVCKTWLKEAVSVRKFQSRPW. Kelch repeat units follow at residues 190–233 and 234–279; these read CVIS…INRC and IFSN…LVRQ.

This Arabidopsis thaliana (Mouse-ear cress) protein is F-box/kelch-repeat protein At3g18720.